The sequence spans 308 residues: ATP synthase gamma chain (308 aa).

It belongs to the ATPase gamma chain family. F-type ATPases have 2 components, CF(1) - the catalytic core - and CF(0) - the membrane proton channel. CF(1) has five subunits: alpha(3), beta(3), gamma(1), delta(1), epsilon(1). CF(0) has three main subunits: a, b and c.

Its subcellular location is the cell membrane. Functionally, produces ATP from ADP in the presence of a proton gradient across the membrane. The gamma chain is believed to be important in regulating ATPase activity and the flow of protons through the CF(0) complex. The chain is ATP synthase gamma chain from Mycobacteroides abscessus (strain ATCC 19977 / DSM 44196 / CCUG 20993 / CIP 104536 / JCM 13569 / NCTC 13031 / TMC 1543 / L948) (Mycobacterium abscessus).